The following is a 201-amino-acid chain: LexA repressor (201 aa).

Residues 27 to 47 (RMEISSAFGFASPNAAEDHLK) constitute a DNA-binding region (H-T-H motif). Residues serine 116 and lysine 153 each act as for autocatalytic cleavage activity in the active site.

This sequence belongs to the peptidase S24 family. Homodimer.

The catalysed reaction is Hydrolysis of Ala-|-Gly bond in repressor LexA.. Functionally, represses a number of genes involved in the response to DNA damage (SOS response), including recA and lexA. In the presence of single-stranded DNA, RecA interacts with LexA causing an autocatalytic cleavage which disrupts the DNA-binding part of LexA, leading to derepression of the SOS regulon and eventually DNA repair. The sequence is that of LexA repressor from Dechloromonas aromatica (strain RCB).